Consider the following 459-residue polypeptide: MFS-type transporter SLC18B1 (459 aa).

Residue Met-1 is modified to N-acetylmethionine. Positions 1–10 are enriched in low complexity; the sequence is MDEAGSPAPA. The disordered stretch occupies residues 1-27; it reads MDEAGSPAPAGTGGGDDPGGSTRETSR. The Cytoplasmic portion of the chain corresponds to 1–33; the sequence is MDEAGSPAPAGTGGGDDPGGSTRETSRRLSREQ. Residue Ser-21 is modified to Phosphoserine. Residues 34–54 traverse the membrane as a helical segment; the sequence is IFVLVSAASMNLGCMMTYSIL. The Extracellular portion of the chain corresponds to 55–70; sequence GPFFPKEAEKKGASNT. The helical transmembrane segment at 71-91 threads the bilayer; it reads MIGMIFGCYALFELLASLVFG. Topologically, residues 92–100 are cytoplasmic; it reads KYLVHIGAK. A helical membrane pass occupies residues 101-121; that stretch reads FMFIAGMFVSGGVTILFGVLD. Over 122-127 the chain is Extracellular; that stretch reads QLPEGP. Residues 128–148 form a helical membrane-spanning segment; the sequence is IFIAMCFLVRIVDAIGFGAAI. Over 149-167 the chain is Cytoplasmic; it reads TASSSILAKAFPNNVATVM. A helical membrane pass occupies residues 168–188; sequence GSLEVFSGLGLVAGPPLGGLL. Residues 189–195 are Extracellular-facing; sequence YQSFGYE. Residues 196–216 traverse the membrane as a helical segment; that stretch reads VPFIFLGCIVLLMIPLNLYIL. Residues 217-235 are Cytoplasmic-facing; sequence PSYAQESDPGKQSFWKLVT. The chain crosses the membrane as a helical span at residues 236–256; the sequence is LPKMGLLAFVIISLSSCFGFL. Topologically, residues 257–274 are extracellular; that stretch reads DPTLSLFVMEKFSLSTGY. A helical membrane pass occupies residues 275 to 295; it reads VGLVFLGLSLSYAISSPLFGL. Residues 296 to 306 are Cytoplasmic-facing; sequence LSDKMPTLRKW. The helical transmembrane segment at 307–327 threads the bilayer; the sequence is LLVFGNLITAGCYMLLGPVPL. Over 328-333 the chain is Extracellular; sequence LHIKSQ. Residues 334-354 form a helical membrane-spanning segment; that stretch reads LWLLVLVLVVNGISAGMSIIP. The Cytoplasmic segment spans residues 355-379; that stretch reads TFPEMLSCAYANGFEDSISTLGLVS. The helical transmembrane segment at 380 to 400 threads the bilayer; that stretch reads GLFGAMWSVGAFMGPILGGFL. Residues 401-409 lie on the Extracellular side of the membrane; the sequence is CEKIGFEWA. A helical membrane pass occupies residues 410-430; it reads AAMQGLWTLLSGVSMALFYLW. Topologically, residues 431 to 459 are cytoplasmic; that stretch reads EDSTARRRSKAQNSLGTEEERAALLPNDT. A disordered region spans residues 440 to 459; the sequence is KAQNSLGTEEERAALLPNDT.

Belongs to the major facilitator superfamily. Widely expressed, with highest expression in the lung, pancreas and kidney. High expression in the CNS, particularly in the hypothalamus, the thalamus and the cerebellum. In the forebrain, abundantly expressed in the telencephalon, especially in the cerebral cortex layers, except layer 1, as well as in the induseum griseum, the piriform area, the taenia tecta, dorsal part and in the entorhinal area, lateral part. Lower levels in the bed anterior olfactory nucleus, posteroventral part and in layer two of the olfactory tubercle. In the amygdala, high levels observed in the intercalated nucleus and the medial nucleus. In the diencephalon, expressed in the nuclei in both the hypothalamus and thalamus. Among the hypothalamic areas, strongest expression in the arcuate nucleus and in the ventromedial nucleus, as well as in the suprachiasmatic nucleus, anterior nucleus, especially in its central part, and in the magnocellular division of the paraventricular nucleus. In the thalamus, highest levels in the medial habenula. Expression also observed in the paraventricular thalamic nucleus, parataenial nucleus, central medial nucleus, intermediodorsal nucleus and lateral dorsal nucleus. In the hindbrain, detected in the cerebellum and in the pons. In the midbrain and the medulla, expression levels were modest. In the midbrain, highest expression in the periaqueductal gray and all subdivisions of the interpeduncular nucleus, except for the caudal part. In the pons, the strongest labeling was seen in the nucleus incertus and in the tegmental nucleus. Expressed in bone marrow-derived mast cells (at protein level).

Its subcellular location is the cytoplasmic vesicle. The protein localises to the secretory vesicle membrane. It is found in the secretory vesicle. The protein resides in the synaptic vesicle membrane. It catalyses the reaction spermine(in) + n H(+)(out) = spermine(out) + n H(+)(in). The enzyme catalyses spermidine(in) + n H(+)(out) = spermidine(out) + n H(+)(in). It carries out the reaction serotonin(in) + n H(+)(out) = serotonin(out) + n H(+)(in). Functionally, proton-coupled polyamine antiporter involved in the translocation of polyamines from cytosol into secretory vesicles prior to their release via exocytosis. Uses the electrochemical proton gradient generated by a V-type proton-pumping ATPase to couple the efflux of protons with the uptake of a polyamine molecule. Facilitates vesicular storage of spermine and spermidine in astrocytes with an impact on glutamatergic neuronal transmission and memory formation. Upon antigen stimulation, regulates polyamine accumulation and release in mast cell secretory granules, which in turn potentiates mast cell degranulation and histamine secretion. In Mus musculus (Mouse), this protein is MFS-type transporter SLC18B1.